Consider the following 61-residue polypeptide: Sperm protamine P1 (61 aa).

Positions 1 to 61 are disordered; sequence MARFRRSRSR…RSSRRSRRRN (61 aa).

It belongs to the protamine P1 family. Testis.

It localises to the nucleus. The protein resides in the chromosome. Protamines substitute for histones in the chromatin of sperm during the haploid phase of spermatogenesis. They compact sperm DNA into a highly condensed, stable and inactive complex. The polypeptide is Sperm protamine P1 (PRM1) (Ornithorhynchus anatinus (Duckbill platypus)).